The primary structure comprises 361 residues: Large ribosomal subunit protein mL45 (361 aa).

A disordered region spans residues 319 to 361 (EPPKELSAGDAEVKQVDSVGEQSKEQLPLATPVESHTKPSLAI).

The protein belongs to the mitochondrion-specific ribosomal protein mL45 family.

The protein localises to the mitochondrion. This is Large ribosomal subunit protein mL45 (mRpL45) from Drosophila melanogaster (Fruit fly).